The primary structure comprises 821 residues: Serine/threonine-protein kinase RAD53 (821 aa).

Ser24 carries the phosphoserine modification. One can recognise an FHA 1 domain in the interval 66-116 (WTFGRNPACDYHLGNISRLSNKHFQILLGEDGNLLLNDISTNGTWLNGQKV). Ser175 is subject to Phosphoserine. Residues 198–466 (SIIDEVVGQG…AAKALNHPWI (269 aa)) enclose the Protein kinase domain. ATP is bound by residues 204 to 212 (VGQGAFATV) and Lys227. The active-site Proton acceptor is the Asp319. Ser547 and Ser560 each carry phosphoserine. The region spanning 601–664 (FFIGRSEDCN…NVSYLNNNRM (64 aa)) is the FHA 2 domain. Residues 735-770 (AAQRANQPSASSSSMSAKKPPVSDTNNNGNNSVLND) are disordered. Positions 742-770 (PSASSSSMSAKKPPVSDTNNNGNNSVLND) are enriched in low complexity. 2 positions are modified to phosphoserine: Ser774 and Ser793. Residues 791–821 (SLSQSQIDPSKKVKRAKLDQTSKGPENLQFS) form a disordered region. Positions 809-821 (DQTSKGPENLQFS) are enriched in polar residues.

It belongs to the protein kinase superfamily. CAMK Ser/Thr protein kinase family. CHEK2 subfamily. In terms of assembly, interacts (via domain FHA 1) with PTC2 (when phosphorylated); the interaction is direct and serves to regulate DNA damage checkpoint signaling. Interacts with PIN4. Post-translationally, autophosphorylated. Phosphorylated in response to DNA double-strand breaks; dephosphorylation is mediated by PTC2 and PTC3.

It localises to the nucleus. The catalysed reaction is L-seryl-[protein] + ATP = O-phospho-L-seryl-[protein] + ADP + H(+). It carries out the reaction L-threonyl-[protein] + ATP = O-phospho-L-threonyl-[protein] + ADP + H(+). The enzyme catalyses L-tyrosyl-[protein] + ATP = O-phospho-L-tyrosyl-[protein] + ADP + H(+). Inactivated by dephosphorylation via recruitment of PTC2. In terms of biological role, controls S-phase checkpoint as well as G1 and G2 DNA damage checkpoints. Phosphorylates proteins on serine, threonine, and tyrosine. Prevents entry into anaphase and mitotic exit after DNA damage via regulation of the Polo kinase CDC5. Seems to be involved in the phosphorylation of RPH1. In Saccharomyces cerevisiae (strain ATCC 204508 / S288c) (Baker's yeast), this protein is Serine/threonine-protein kinase RAD53 (RAD53).